Consider the following 415-residue polypeptide: MSLKRPLSEVDPEIFRAIELETQRQRNTLELIASENVASRAVMEAQGSVLTNKYAEGYPGRRYYGGCEFVDIAEDLAISRAKELFGAGFANVQPHSGAQANTAVYFALLNPGDTIMGMDLAHGGHLTHGSPVNISGRYFKFTFYGVEKETGRINYEKMFSIAFEHKPRMIVAGASAYPRAIDFYKIKEIAAEVGAYLMVDMAHIAGLVAAGLHMSPVPYADVVTTTTHKTLRGPRGGLILCKDAERYGTKINRAVFPGVQGGPLMHVIAAKAVAFKEAMEPGFKEYQRKIVSNARALADALLERGFELVSGGTDNHLILVDLRSKKITGREAQELFDAVGVTVNKNAVPFDPQPPNIASGIRIGTPAVTSRGLNEDDMVQIAEIMDYAIEHRDDRGKLEKARAKVDEICARYPLY.

(6S)-5,6,7,8-tetrahydrofolate contacts are provided by residues leucine 120 and 124-126 (GHL). Lysine 229 carries the N6-(pyridoxal phosphate)lysine modification.

This sequence belongs to the SHMT family. Homodimer. Pyridoxal 5'-phosphate serves as cofactor.

It is found in the cytoplasm. It carries out the reaction (6R)-5,10-methylene-5,6,7,8-tetrahydrofolate + glycine + H2O = (6S)-5,6,7,8-tetrahydrofolate + L-serine. Its pathway is one-carbon metabolism; tetrahydrofolate interconversion. It participates in amino-acid biosynthesis; glycine biosynthesis; glycine from L-serine: step 1/1. Its function is as follows. Catalyzes the reversible interconversion of serine and glycine with tetrahydrofolate (THF) serving as the one-carbon carrier. This reaction serves as the major source of one-carbon groups required for the biosynthesis of purines, thymidylate, methionine, and other important biomolecules. Also exhibits THF-independent aldolase activity toward beta-hydroxyamino acids, producing glycine and aldehydes, via a retro-aldol mechanism. This is Serine hydroxymethyltransferase from Pelotomaculum thermopropionicum (strain DSM 13744 / JCM 10971 / SI).